A 341-amino-acid polypeptide reads, in one-letter code: Thymidine kinase (341 aa).

Position 19 to 26 (19 to 26 (GAYGIGKT)) interacts with ATP. Catalysis depends on glutamate 48, which acts as the Proton acceptor. The substrate site is built by tyrosine 66 and glutamine 90. Arginine 183 is an ATP binding site. Arginine 189 contributes to the substrate binding site.

Belongs to the herpesviridae thymidine kinase family. As to quaternary structure, homodimer.

It catalyses the reaction thymidine + ATP = dTMP + ADP + H(+). Its function is as follows. Catalyzes the transfer of the gamma-phospho group of ATP to thymidine to generate dTMP in the salvage pathway of pyrimidine synthesis. The dTMP serves as a substrate for DNA polymerase during viral DNA replication. Allows the virus to be reactivated and to grow in non-proliferative cells lacking a high concentration of phosphorylated nucleic acid precursors. The sequence is that of Thymidine kinase from Varicella-zoster virus (strain Dumas) (HHV-3).